A 348-amino-acid chain; its full sequence is tRNA N6-adenosine threonylcarbamoyltransferase (348 aa).

His118 and His122 together coordinate Fe cation. Substrate is bound by residues 140–144 (LVSGG), Asp173, Gly186, Asp190, and Asn279. Asp309 contacts Fe cation.

This sequence belongs to the KAE1 / TsaD family. Fe(2+) is required as a cofactor.

Its subcellular location is the cytoplasm. It catalyses the reaction L-threonylcarbamoyladenylate + adenosine(37) in tRNA = N(6)-L-threonylcarbamoyladenosine(37) in tRNA + AMP + H(+). Functionally, required for the formation of a threonylcarbamoyl group on adenosine at position 37 (t(6)A37) in tRNAs that read codons beginning with adenine. Is involved in the transfer of the threonylcarbamoyl moiety of threonylcarbamoyl-AMP (TC-AMP) to the N6 group of A37, together with TsaE and TsaB. TsaD likely plays a direct catalytic role in this reaction. This Lactiplantibacillus plantarum (strain ATCC BAA-793 / NCIMB 8826 / WCFS1) (Lactobacillus plantarum) protein is tRNA N6-adenosine threonylcarbamoyltransferase.